We begin with the raw amino-acid sequence, 154 residues long: Myoglobin (154 aa).

One can recognise a Globin domain in the interval Gly-2 to Lys-148. The residue at position 4 (Ser-4) is a Phosphoserine. Position 65 (His-65) interacts with nitrite. His-65 is an O2 binding site. Position 68 is a phosphothreonine (Thr-68). His-94 is a binding site for heme b.

This sequence belongs to the globin family. As to quaternary structure, monomeric.

The protein localises to the cytoplasm. Its subcellular location is the sarcoplasm. The enzyme catalyses Fe(III)-heme b-[protein] + nitric oxide + H2O = Fe(II)-heme b-[protein] + nitrite + 2 H(+). It catalyses the reaction H2O2 + AH2 = A + 2 H2O. In terms of biological role, monomeric heme protein which primary function is to store oxygen and facilitate its diffusion within muscle tissues. Reversibly binds oxygen through a pentacoordinated heme iron and enables its timely and efficient release as needed during periods of heightened demand. Depending on the oxidative conditions of tissues and cells, and in addition to its ability to bind oxygen, it also has a nitrite reductase activity whereby it regulates the production of bioactive nitric oxide. Under stress conditions, like hypoxia and anoxia, it also protects cells against reactive oxygen species thanks to its pseudoperoxidase activity. The polypeptide is Myoglobin (MB) (Lutra lutra (European river otter)).